The sequence spans 385 residues: Na(+)/H(+) antiporter NhaA (385 aa).

Transmembrane regions (helical) follow at residues 9–29 (YSAI…NVLD), 45–65 (IFGL…VFFF), 87–107 (IIPG…YLSV), 114–134 (GWPV…AIFG), 155–175 (AGIV…WIIV), 198–218 (TFLI…SVYQ), 220–235 (GIHA…IMLN), 245–265 (ALEP…AAMV), 282–302 (ILLG…IIAL), 312–332 (FFNL…SLLM), and 345–365 (QGVI…IILM).

The protein belongs to the NhaA Na(+)/H(+) (TC 2.A.33) antiporter family.

The protein localises to the cell membrane. It carries out the reaction Na(+)(in) + 2 H(+)(out) = Na(+)(out) + 2 H(+)(in). Its function is as follows. Na(+)/H(+) antiporter that extrudes sodium in exchange for external protons. The protein is Na(+)/H(+) antiporter NhaA of Tropheryma whipplei (strain Twist) (Whipple's bacillus).